Consider the following 376-residue polypeptide: N-acetyldiaminopimelate deacetylase (376 aa).

Asp69 is a catalytic residue. Residue Glu128 is the Proton acceptor of the active site.

This sequence belongs to the peptidase M20A family. N-acetyldiaminopimelate deacetylase subfamily.

The catalysed reaction is N-acetyl-(2S,6S)-2,6-diaminopimelate + H2O = (2S,6S)-2,6-diaminopimelate + acetate. It functions in the pathway amino-acid biosynthesis; L-lysine biosynthesis via DAP pathway; LL-2,6-diaminopimelate from (S)-tetrahydrodipicolinate (acetylase route): step 3/3. Functionally, catalyzes the conversion of N-acetyl-diaminopimelate to diaminopimelate and acetate. The sequence is that of N-acetyldiaminopimelate deacetylase from Bacillus cereus (strain B4264).